The following is a 217-amino-acid chain: Coiled-coil domain-containing protein 124-A (217 aa).

Residues 1-128 (MPKKFQGENT…HLEMPLEENV (128 aa)) are disordered. Basic and acidic residues-rich tracts occupy residues 18-45 (RKAE…DDKH), 52-74 (RKED…QRLL), and 95-128 (TRAE…EENV). The stretch at 46-82 (VARKGQRKEDKEKKRLEQLERKKESQRLLDEEDSKMK) forms a coiled coil.

This sequence belongs to the CCDC124 family. In terms of assembly, associates with translationally inactive ribosomes in the nonrotated state.

Its subcellular location is the cytoplasm. It localises to the cytoskeleton. The protein localises to the microtubule organizing center. It is found in the centrosome. The protein resides in the midbody. Ribosome-binding protein involved in ribosome hibernation: associates with translationally inactive ribosomes and stabilizes the nonrotated conformation of the 80S ribosome, thereby promoting ribosome preservation and storage. The sequence is that of Coiled-coil domain-containing protein 124-A (ccdc124-a) from Xenopus laevis (African clawed frog).